Here is a 250-residue protein sequence, read N- to C-terminus: Sulfate transporter CysZ (250 aa).

Helical transmembrane passes span 26-46 (LFVL…IYLA), 71-91 (ILWP…FTML), 150-170 (LFIL…WLLF), and 211-231 (IVYL…AAVA).

It belongs to the CysZ family.

It localises to the cell inner membrane. High affinity, high specificity proton-dependent sulfate transporter, which mediates sulfate uptake. Provides the sulfur source for the cysteine synthesis pathway. This Pseudomonas fluorescens (strain Pf0-1) protein is Sulfate transporter CysZ.